The following is a 109-amino-acid chain: C-X-C motif chemokine 13 (109 aa).

Residues 1–21 (MRLSTATLLLLLASCLSPGHG) form the signal peptide. 2 disulfide bridges follow: Cys-32-Cys-59 and Cys-34-Cys-75.

The protein belongs to the intercrine alpha (chemokine CxC) family. Found in spleen (B-cell-rich zone or follicles), Peyer patches (strongest within germinal centers and extending to the mantle zone) and lymph nodes (in reticular pattern in follicles).

The protein resides in the secreted. Its function is as follows. Strongly chemotactic for B-lymphocytes, weakly for spleen monocytes and macrophages but no chemotactic activity for granulocytes. Binds to BLR1/CXCR5. May play a role in directing the migration of B-lymphocytes to follicles in secondary lymphoid organs. This is C-X-C motif chemokine 13 (Cxcl13) from Mus musculus (Mouse).